Reading from the N-terminus, the 1206-residue chain is DNA-directed RNA polymerase subunit beta' (1206 aa).

Zn(2+) contacts are provided by cysteine 60, cysteine 62, cysteine 75, and cysteine 78. Mg(2+)-binding residues include aspartate 449, aspartate 451, and aspartate 453. Zn(2+)-binding residues include cysteine 818, cysteine 892, cysteine 899, and cysteine 902.

Belongs to the RNA polymerase beta' chain family. The RNAP catalytic core consists of 2 alpha, 1 beta, 1 beta' and 1 omega subunit. When a sigma factor is associated with the core the holoenzyme is formed, which can initiate transcription. Requires Mg(2+) as cofactor. It depends on Zn(2+) as a cofactor.

It catalyses the reaction RNA(n) + a ribonucleoside 5'-triphosphate = RNA(n+1) + diphosphate. Its function is as follows. DNA-dependent RNA polymerase catalyzes the transcription of DNA into RNA using the four ribonucleoside triphosphates as substrates. This chain is DNA-directed RNA polymerase subunit beta', found in Halalkalibacterium halodurans (strain ATCC BAA-125 / DSM 18197 / FERM 7344 / JCM 9153 / C-125) (Bacillus halodurans).